Here is a 27-residue protein sequence, read N- to C-terminus: DELTA-pseudomyrmecitoxin-Pp1a subunit A (27 aa).

In terms of assembly, heterodimer composed of subunit A and subunit B (DELTA-PSDTX-Pp1a); disulfide-linked. As to expression, expressed by the venom gland.

Its subcellular location is the secreted. Functionally, this heterodimer has insecticidal and cytotoxic properties. Induces immediate paralysis when injected into blowflies (Lucilia cuprina), and then death within 24 hours. Also inhibits the growth of Aedes albopictus mosquito C6/36 cells. This Pseudomyrmex penetrator (Ant) protein is DELTA-pseudomyrmecitoxin-Pp1a subunit A.